The sequence spans 611 residues: MSRSPLHPIPLLSEGYQDTPAPLPPLLPPLQNPSSRSWASRVFGPSTWGLSCLLALQHFLVLASLLWASHLLLLHGLPPGGLSYPPAQLLASSFFSCGLSTVLQTWMGSRLPLIQAPSLEFLIPALVLTNQKLPLTTKTPGNASLSLPLCSLTRSCHGLELWNTSLREVSGAVVVSGLLQGTIGLLGVPGRVFPYCGPLVLAPSLVVAGLSAHKEVAQFCSAHWGLALLLILLMVVCSQHLGSCQIPLCSWRPSSTSTHICIPVFRLLSVLAPVACVWFISAFVGTSVIPLQLSEPSDAPWFWLPHPGEWEWPLLTPRALAAGISMALAASTSSLGCYALCGQLLRLSPPPPHACSRGLSLEGLGSVLAGLLGSPLGTASSFPNVGTVSLFQTGSRRVAHLVGLFCMGLGLSPRLAQLFTSIPLPVLGGVLGVTQAVVLSAGFSSFHLADIDSGRNVFIVGFSIFMALLLPRWLREAPVLLNTGWSPLDMFLRSLLAEPIFLAGLLGFLLENTISGTRAERGLGQRLPTSFTAQEIQMLQQSRRKAAQEYGLPLPIKNLCSCIPQPLHCLCPMPEDSGDEGGSSKTGERADLLPNSGESYSTASREGVRSQ.

Over methionine 1–cysteine 52 the chain is Cytoplasmic. The chain crosses the membrane as a helical span at residues leucine 53–leucine 73. The Extracellular segment spans residues leucine 74–glutamine 88. The chain crosses the membrane as a helical span at residues leucine 89–serine 109. At arginine 110–glutamate 168 the chain is on the cytoplasmic side. Residues valine 169–proline 189 form a helical membrane-spanning segment. The Extracellular portion of the chain corresponds to glycine 190–arginine 191. The chain crosses the membrane as a helical span at residues valine 192 to alanine 212. Residues histidine 213–glutamate 215 lie on the Cytoplasmic side of the membrane. A helical transmembrane segment spans residues valine 216 to valine 236. Residues cysteine 237–serine 269 are Extracellular-facing. Residues valine 270–proline 290 traverse the membrane as a helical segment. The Cytoplasmic segment spans residues leucine 291 to alanine 319. Residues leucine 320–leucine 340 traverse the membrane as a helical segment. At cysteine 341–glycine 358 the chain is on the extracellular side. The helical transmembrane segment at leucine 359–alanine 379 threads the bilayer. The Cytoplasmic portion of the chain corresponds to serine 380–arginine 397. The helical transmembrane segment at valine 398–glutamine 417 threads the bilayer. The Extracellular segment spans residues leucine 418 to valine 426. Residues leucine 427–alanine 449 form a helical membrane-spanning segment. The Cytoplasmic segment spans residues aspartate 450–arginine 455. A helical membrane pass occupies residues asparagine 456–arginine 475. Residues glutamate 476–aspartate 489 are Extracellular-facing. The helical transmembrane segment at methionine 490 to leucine 510 threads the bilayer. Topologically, residues glutamate 511–glutamine 611 are cytoplasmic. Residues proline 574–glutamine 611 form a disordered region. The span at serine 596 to arginine 605 shows a compositional bias: polar residues.

This sequence belongs to the nucleobase:cation symporter-2 (NCS2) (TC 2.A.40) family.

It localises to the membrane. The protein localises to the cytoplasm. The catalysed reaction is hypoxanthine(out) + Na(+)(out) = hypoxanthine(in) + Na(+)(in). Acts as a sodium-dependent hypoxanthine transporter. May show xanthine-hypoxanthine exchange activity. The sequence is that of Solute carrier family 23 member 3 (Slc23a3) from Mus musculus (Mouse).